The primary structure comprises 881 residues: Serine/threonine-protein kinase/endoribonuclease IRE1b (881 aa).

Residues 1-21 (MRGSALLDLILFLLVSPLAHS) form the signal peptide. The Lumenal segment spans residues 22 to 357 (FKGSEISKFY…KQAGFASKFS (336 aa)). Asn-115 carries an N-linked (GlcNAc...) asparagine glycan. Residues 358 to 378 (GLIVLIFGFCVTMLSVCGLFF) form a helical membrane-spanning segment. The Cytoplasmic portion of the chain corresponds to 379–881 (YRLRQSIRIK…FFKYSKTTVF (503 aa)). Positions 459–744 (FVSNKEIAKG…AQDVMHHPLF (286 aa)) constitute a Protein kinase domain. ATP-binding positions include 465 to 473 (IAKGSNGTV) and Lys-487. The ATP selon article stretch occupies residues 481–502 (GRLVAVKRLVQSHHDVAQKEIL). The active-site Proton acceptor is the Asp-608. Residues 642–661 (LTRNSTGLGSGSSGWQAPEQ) are disordered. One can recognise a KEN domain in the interval 747–878 (SDMRLSFLRD…EEFFFKYSKT (132 aa)).

It belongs to the protein kinase superfamily. Ser/Thr protein kinase family. As to quaternary structure, homodimer; disulfide-linked. Dimer formation is driven by hydrophobic interactions within the N-terminal luminal domains and stabilized by disulfide bridges. Mg(2+) serves as cofactor. Post-translationally, autophosphorylated. In terms of tissue distribution, ubiquitous. Detected in the apical meristem, at leaf margins where vascular bundles end, in the anthers before pollen is formed and in the ovules at a very early stage of development. There is no expression in more mature embryos. Also strongly expressed in the cotyledons immediately after germination but not later on.

Its subcellular location is the endoplasmic reticulum membrane. It catalyses the reaction L-seryl-[protein] + ATP = O-phospho-L-seryl-[protein] + ADP + H(+). It carries out the reaction L-threonyl-[protein] + ATP = O-phospho-L-threonyl-[protein] + ADP + H(+). The kinase domain is activated by trans-autophosphorylation. Kinase activity is required for activation of the endoribonuclease domain. Senses unfolded proteins in the lumen of the endoplasmic reticulum via its N-terminal domain which leads to enzyme auto-activation. The active endoribonuclease domain splices bZIP60 mRNA to generate a new C-terminus, converting it into a potent unfolded-protein response transcriptional activator which then induces transcription of UPR target genes. Involved in organ growth regulation. Plays a role in plant immunity and abiotic stress responses. Required for ER stress-induced autophagy. The chain is Serine/threonine-protein kinase/endoribonuclease IRE1b (IRE1B) from Arabidopsis thaliana (Mouse-ear cress).